A 346-amino-acid polypeptide reads, in one-letter code: N-acetyl-gamma-glutamyl-phosphate reductase (346 aa).

Cysteine 151 is an active-site residue.

It belongs to the NAGSA dehydrogenase family. Type 1 subfamily.

It localises to the cytoplasm. The catalysed reaction is N-acetyl-L-glutamate 5-semialdehyde + phosphate + NADP(+) = N-acetyl-L-glutamyl 5-phosphate + NADPH + H(+). It functions in the pathway amino-acid biosynthesis; L-arginine biosynthesis; N(2)-acetyl-L-ornithine from L-glutamate: step 3/4. Catalyzes the NADPH-dependent reduction of N-acetyl-5-glutamyl phosphate to yield N-acetyl-L-glutamate 5-semialdehyde. In Ehrlichia chaffeensis (strain ATCC CRL-10679 / Arkansas), this protein is N-acetyl-gamma-glutamyl-phosphate reductase.